Here is a 203-residue protein sequence, read N- to C-terminus: NAD(P)H-quinone oxidoreductase subunit I (203 aa).

2 4Fe-4S ferredoxin-type domains span residues 55 to 84 and 95 to 124; these read GRIHFEFDKCIACEVCVRVCPINLPVVDWE and KHYSIDFGVCIFCGNCVEYCPTNCLSMTEE. Residues C64, C67, C70, C74, C104, C107, C110, and C114 each contribute to the [4Fe-4S] cluster site.

This sequence belongs to the complex I 23 kDa subunit family. As to quaternary structure, NDH-1 is composed of at least 11 different subunits. [4Fe-4S] cluster serves as cofactor.

The protein localises to the cellular thylakoid membrane. It catalyses the reaction a plastoquinone + NADH + (n+1) H(+)(in) = a plastoquinol + NAD(+) + n H(+)(out). It carries out the reaction a plastoquinone + NADPH + (n+1) H(+)(in) = a plastoquinol + NADP(+) + n H(+)(out). In terms of biological role, NDH-1 shuttles electrons from an unknown electron donor, via FMN and iron-sulfur (Fe-S) centers, to quinones in the respiratory and/or the photosynthetic chain. The immediate electron acceptor for the enzyme in this species is believed to be plastoquinone. Couples the redox reaction to proton translocation, and thus conserves the redox energy in a proton gradient. The sequence is that of NAD(P)H-quinone oxidoreductase subunit I (ndhI) from Picosynechococcus sp. (strain ATCC 27264 / PCC 7002 / PR-6) (Agmenellum quadruplicatum).